Consider the following 391-residue polypeptide: Probable acridone synthase 3 (391 aa).

C164 is a catalytic residue.

It belongs to the thiolase-like superfamily. Chalcone/stilbene synthases family.

It catalyses the reaction N-methylanthraniloyl-CoA + 3 malonyl-CoA + 3 H(+) = 1,3-dihydroxy-N-methylacridone + 3 CO2 + 4 CoA + H2O. This chain is Probable acridone synthase 3 (ACS3), found in Ruta graveolens (Common rue).